Consider the following 368-residue polypeptide: Homoserine O-acetyltransferase (368 aa).

Positions 41–352 (NVILITHALS…DYGHDSFLVE (312 aa)) constitute an AB hydrolase-1 domain. The Nucleophile role is filled by S147. Residue R219 coordinates substrate. Residues D313 and H346 contribute to the active site. D347 is a substrate binding site.

Belongs to the AB hydrolase superfamily. MetX family. Homodimer.

It is found in the cytoplasm. It catalyses the reaction L-homoserine + acetyl-CoA = O-acetyl-L-homoserine + CoA. The protein operates within amino-acid biosynthesis; L-methionine biosynthesis via de novo pathway; O-acetyl-L-homoserine from L-homoserine: step 1/1. Its function is as follows. Transfers an acetyl group from acetyl-CoA to L-homoserine, forming acetyl-L-homoserine. In Nautilia profundicola (strain ATCC BAA-1463 / DSM 18972 / AmH), this protein is Homoserine O-acetyltransferase.